The sequence spans 156 residues: MIYYIVALVIILLDQWTKWLVVRHMEIGESIPLLDSVLYLTSHRNKGAAFGILEGQMWLFYIITSIVVIGIVYYMEKEAKHDRVFATALALILGGAIGNFIDRIFRGEVVDFVNTYIFTYNFPIFNVADSALCVGVGILFLKMIRDERKAKKEKNA.

The next 2 membrane-spanning stretches (helical) occupy residues 52–72 (ILEG…IGIV) and 85–105 (FATA…DRIF). Residues Asp-111 and Asp-129 contribute to the active site. A helical membrane pass occupies residues 121–141 (NFPIFNVADSALCVGVGILFL).

This sequence belongs to the peptidase A8 family.

It is found in the cell membrane. The catalysed reaction is Release of signal peptides from bacterial membrane prolipoproteins. Hydrolyzes -Xaa-Yaa-Zaa-|-(S,diacylglyceryl)Cys-, in which Xaa is hydrophobic (preferably Leu), and Yaa (Ala or Ser) and Zaa (Gly or Ala) have small, neutral side chains.. Its pathway is protein modification; lipoprotein biosynthesis (signal peptide cleavage). Its function is as follows. This protein specifically catalyzes the removal of signal peptides from prolipoproteins. The polypeptide is Lipoprotein signal peptidase (Halalkalibacterium halodurans (strain ATCC BAA-125 / DSM 18197 / FERM 7344 / JCM 9153 / C-125) (Bacillus halodurans)).